Consider the following 362-residue polypeptide: Acyl-CoA-binding domain-containing protein 3 (362 aa).

The first 22 residues, 1–22, serve as a signal peptide directing secretion; it reads MEVFLEMLLTAVVALLFSFLLA. 2 disordered regions span residues 132 to 151 and 193 to 214; these read QDEQ…SPEN and VEKS…EKTE. Residues 192-221 are a coiled coil; that stretch reads RVEKSSNMVEESDAEAENEEKTELTIEEDD. Residues 231 to 318 enclose the ACB domain; sequence LEKAFAAAVN…VSKEIPGLTK (88 aa). An acyl-CoA contacts are provided by residues 260 to 264, lysine 286, and tyrosine 305; that span reads FGLHK. Residues 329–362 are disordered; that stretch reads METSVGLPPNSGSLEDPTNLVTTGVDESSKNGIP.

It belongs to the ACBP family. Expressed in roots, stems, leaves, flowers and siliques.

The protein resides in the secreted. It localises to the extracellular space. Functionally, binds medium- and long-chain acyl-CoA esters with very high affinity. Can interact in vitro with arachidonyl-CoA, barely with oleoyl-CoA, but not with palmitoyl-CoA. The polypeptide is Acyl-CoA-binding domain-containing protein 3 (ACBP3) (Arabidopsis thaliana (Mouse-ear cress)).